Reading from the N-terminus, the 185-residue chain is Ribose 1,5-bisphosphate phosphokinase PhnN (185 aa).

An ATP-binding site is contributed by 13–20 (GPSGAGKD).

This sequence belongs to the ribose 1,5-bisphosphokinase family.

The catalysed reaction is alpha-D-ribose 1,5-bisphosphate + ATP = 5-phospho-alpha-D-ribose 1-diphosphate + ADP. It participates in metabolic intermediate biosynthesis; 5-phospho-alpha-D-ribose 1-diphosphate biosynthesis; 5-phospho-alpha-D-ribose 1-diphosphate from D-ribose 5-phosphate (route II): step 3/3. Its function is as follows. Catalyzes the phosphorylation of ribose 1,5-bisphosphate to 5-phospho-D-ribosyl alpha-1-diphosphate (PRPP). The polypeptide is Ribose 1,5-bisphosphate phosphokinase PhnN (Chromobacterium violaceum (strain ATCC 12472 / DSM 30191 / JCM 1249 / CCUG 213 / NBRC 12614 / NCIMB 9131 / NCTC 9757 / MK)).